Consider the following 538-residue polypeptide: Pentachlorophenol 4-monooxygenase (538 aa).

Residues Ala16–Arg45 and Tyr288–Asp298 contribute to the FAD site.

It belongs to the PheA/TfdB FAD monooxygenase family. As to quaternary structure, homodimer. It depends on FAD as a cofactor.

It carries out the reaction pentachlorophenol + NADPH + O2 + H(+) = 2,3,5,6-tetrachloro-1,4-benzoquinone + chloride + NADP(+) + H2O. The catalysed reaction is 2,3,5,6-tetrachlorophenol + NADPH + O2 = 2,3,5,6-tetrachlorohydroquinone + NADP(+) + H2O. Its pathway is xenobiotic degradation; pentachlorophenol degradation. Functionally, dechlorination of pentachlorophenol to tetrachlorobenzoquinone. Also removes hydrogen and nitro, amino, and cyano groups from benzene ring at the para position in relation to the hydroxyl of phenol. This Sphingobium chlorophenolicum protein is Pentachlorophenol 4-monooxygenase (pcpB).